The primary structure comprises 356 residues: Protein pelota homolog (356 aa).

The protein belongs to the eukaryotic release factor 1 family. Pelota subfamily. As to quaternary structure, monomer. The cofactor is a divalent metal cation.

Its subcellular location is the cytoplasm. Its function is as follows. May function in recognizing stalled ribosomes, interact with stem-loop structures in stalled mRNA molecules, and effect endonucleolytic cleavage of the mRNA. May play a role in the release non-functional ribosomes and degradation of damaged mRNAs. Has endoribonuclease activity. In Desulfurococcus amylolyticus (strain DSM 18924 / JCM 16383 / VKM B-2413 / 1221n) (Desulfurococcus kamchatkensis), this protein is Protein pelota homolog.